We begin with the raw amino-acid sequence, 220 residues long: Iron-sulfur cluster repair protein YtfE (220 aa).

This sequence belongs to the RIC family. YtfE subfamily. As to quaternary structure, homodimer.

The protein resides in the cytoplasm. Its function is as follows. Di-iron-containing protein involved in the repair of iron-sulfur clusters damaged by oxidative and nitrosative stress conditions. The chain is Iron-sulfur cluster repair protein YtfE from Escherichia coli O157:H7.